Reading from the N-terminus, the 570-residue chain is Proline--tRNA ligase (570 aa).

It belongs to the class-II aminoacyl-tRNA synthetase family. ProS type 1 subfamily. As to quaternary structure, homodimer.

The protein resides in the cytoplasm. It carries out the reaction tRNA(Pro) + L-proline + ATP = L-prolyl-tRNA(Pro) + AMP + diphosphate. In terms of biological role, catalyzes the attachment of proline to tRNA(Pro) in a two-step reaction: proline is first activated by ATP to form Pro-AMP and then transferred to the acceptor end of tRNA(Pro). As ProRS can inadvertently accommodate and process non-cognate amino acids such as alanine and cysteine, to avoid such errors it has two additional distinct editing activities against alanine. One activity is designated as 'pretransfer' editing and involves the tRNA(Pro)-independent hydrolysis of activated Ala-AMP. The other activity is designated 'posttransfer' editing and involves deacylation of mischarged Ala-tRNA(Pro). The misacylated Cys-tRNA(Pro) is not edited by ProRS. In Clostridium perfringens (strain ATCC 13124 / DSM 756 / JCM 1290 / NCIMB 6125 / NCTC 8237 / Type A), this protein is Proline--tRNA ligase.